We begin with the raw amino-acid sequence, 349 residues long: Protein Wnt-7b (349 aa).

A signal peptide spans 1–24 (MHRNFRKWIFYVFLCFGVLYVKLG). Intrachain disulfides connect Cys73–Cys84, Cys123–Cys131, Cys133–Cys152, Cys200–Cys214, and Cys202–Cys209. 2 N-linked (GlcNAc...) asparagine glycosylation sites follow: Asn83 and Asn127. Ser206 carries the O-palmitoleoyl serine; by PORCN lipid modification. The tract at residues 238–266 (VEVVRASRLRQPTFLRIKQLRSYQKPMET) is disordered linker. 6 disulfide bridges follow: Cys278–Cys309, Cys294–Cys304, Cys308–Cys348, Cys324–Cys339, Cys326–Cys336, and Cys331–Cys332. Residue Asn295 is glycosylated (N-linked (GlcNAc...) asparagine).

The protein belongs to the Wnt family. Forms a soluble 1:1 complex with AFM; this prevents oligomerization and is required for prolonged biological activity. The complex with AFM may represent the physiological form in body fluids. Interacts with FZD1 and FZD10. Interacts with FZD4 (in vitro). Interacts with PORCN. Interacts with glypican GPC3. Interacts (via intrinsically disordered linker region) with RECK; interaction with RECK confers ligand selectivity for Wnt7 in brain endothelial cells and allows these cells to selectively respond to Wnt7. In terms of processing, palmitoleoylation is required for efficient binding to frizzled receptors. Depalmitoleoylation leads to Wnt signaling pathway inhibition.

The protein localises to the secreted. The protein resides in the extracellular space. Its subcellular location is the extracellular matrix. In terms of biological role, ligand for members of the frizzled family of seven transmembrane receptors that functions in the canonical Wnt/beta-catenin signaling pathway. Required for normal fusion of the chorion and the allantois during placenta development. Required for central nervous system (CNS) angiogenesis and blood-brain barrier regulation. The chain is Protein Wnt-7b (Wnt7b) from Mus musculus (Mouse).